The following is a 307-amino-acid chain: Coproporphyrin III ferrochelatase (307 aa).

Residues Y12, R29, R45–Y46, S53, and Y124 contribute to the Fe-coproporphyrin III site. Residues H181 and E263 each coordinate Fe(2+).

This sequence belongs to the ferrochelatase family.

The protein resides in the cytoplasm. It carries out the reaction Fe-coproporphyrin III + 2 H(+) = coproporphyrin III + Fe(2+). It functions in the pathway porphyrin-containing compound metabolism; protoheme biosynthesis. Involved in coproporphyrin-dependent heme b biosynthesis. Catalyzes the insertion of ferrous iron into coproporphyrin III to form Fe-coproporphyrin III. It can also insert iron into protoporphyrin IX, but it has a much stronger preference for coproprophyrin III as the substrate. This Staphylococcus aureus (strain NCTC 8325 / PS 47) protein is Coproporphyrin III ferrochelatase.